A 443-amino-acid polypeptide reads, in one-letter code: UDP-N-acetylmuramate--L-alanine ligase (443 aa).

110 to 116 (GAHGKTS) contributes to the ATP binding site.

This sequence belongs to the MurCDEF family.

The protein resides in the cytoplasm. The catalysed reaction is UDP-N-acetyl-alpha-D-muramate + L-alanine + ATP = UDP-N-acetyl-alpha-D-muramoyl-L-alanine + ADP + phosphate + H(+). It functions in the pathway cell wall biogenesis; peptidoglycan biosynthesis. Functionally, cell wall formation. In Streptococcus agalactiae serotype V (strain ATCC BAA-611 / 2603 V/R), this protein is UDP-N-acetylmuramate--L-alanine ligase.